Here is a 581-residue protein sequence, read N- to C-terminus: Probable peptidoglycan D,D-transpeptidase PenA (581 aa).

A helical membrane pass occupies residues 28-48 (ISFVLMAIAVLFAGLIARGLY). The Acyl-ester intermediate role is filled by serine 310.

Belongs to the transpeptidase family. FtsI subfamily.

It localises to the cell inner membrane. The enzyme catalyses Preferential cleavage: (Ac)2-L-Lys-D-Ala-|-D-Ala. Also transpeptidation of peptidyl-alanyl moieties that are N-acyl substituents of D-alanine.. The protein operates within cell wall biogenesis; peptidoglycan biosynthesis. In terms of biological role, catalyzes cross-linking of the peptidoglycan cell wall at the division septum. The protein is Probable peptidoglycan D,D-transpeptidase PenA of Neisseria meningitidis serogroup A / serotype 4A (strain DSM 15465 / Z2491).